The following is a 335-amino-acid chain: Non-structural protein P9-1 (335 aa).

Over residues 27–42 (FNANTKNQNQNTSNTQ) the composition is skewed to low complexity. The tract at residues 27 to 48 (FNANTKNQNQNTSNTQSSGGIT) is disordered.

This chain is Non-structural protein P9-1 (S9), found in Fiji disease virus (isolate Sugarcane) (FDV).